We begin with the raw amino-acid sequence, 530 residues long: 2,3-bisphosphoglycerate-independent phosphoglycerate mutase (530 aa).

The Mn(2+) site is built by aspartate 15 and serine 65. The active-site Phosphoserine intermediate is serine 65. Residues histidine 126, arginine 155–aspartate 156, arginine 187, arginine 193, arginine 257–arginine 260, and lysine 330 contribute to the substrate site. The Mn(2+) site is built by aspartate 397, histidine 401, aspartate 438, histidine 439, and histidine 456.

This sequence belongs to the BPG-independent phosphoglycerate mutase family. Monomer. It depends on Mn(2+) as a cofactor.

It catalyses the reaction (2R)-2-phosphoglycerate = (2R)-3-phosphoglycerate. The protein operates within carbohydrate degradation; glycolysis; pyruvate from D-glyceraldehyde 3-phosphate: step 3/5. Catalyzes the interconversion of 2-phosphoglycerate and 3-phosphoglycerate. This Synechococcus sp. (strain JA-2-3B'a(2-13)) (Cyanobacteria bacterium Yellowstone B-Prime) protein is 2,3-bisphosphoglycerate-independent phosphoglycerate mutase.